A 1169-amino-acid polypeptide reads, in one-letter code: Transcription-repair-coupling factor (1169 aa).

One can recognise a Helicase ATP-binding domain in the interval 634 to 795 (DMERARPMDR…MLGVRDLSVI (162 aa)). 647–654 (GDVGYGKT) contributes to the ATP binding site. A DEEQ box motif is present at residues 748–751 (DEEQ). One can recognise a Helicase C-terminal domain in the interval 809–970 (VLEQNTNFIK…GFKIAMRDLN (162 aa)).

It in the N-terminal section; belongs to the UvrB family. In the C-terminal section; belongs to the helicase family. RecG subfamily.

The protein resides in the cytoplasm. Functionally, couples transcription and DNA repair by recognizing RNA polymerase (RNAP) stalled at DNA lesions. Mediates ATP-dependent release of RNAP and its truncated transcript from the DNA, and recruitment of nucleotide excision repair machinery to the damaged site. The chain is Transcription-repair-coupling factor from Staphylococcus epidermidis (strain ATCC 35984 / DSM 28319 / BCRC 17069 / CCUG 31568 / BM 3577 / RP62A).